We begin with the raw amino-acid sequence, 133 residues long: Basic phospholipase A2 beta-bungarotoxin A-AL2 chain (133 aa).

The signal sequence occupies residues 1–5 (FLLGA). A propeptide spanning residues 6–13 (ANIPPHPL) is cleaved from the precursor. 6 disulfides stabilise this stretch: C40–C132, C42–C58, C57–C113, C64–C106, C74–C99, and C92–C104. Ca(2+)-binding residues include Y41, G43, and G45. Residue H61 is part of the active site. Position 62 (D62) interacts with Ca(2+). The active site involves D107.

Belongs to the phospholipase A2 family. Group I subfamily. D49 sub-subfamily. Heterodimer; disulfide-linked. The A chains have phospholipase A2 activity and the B chains show homology with the basic protease inhibitors. It depends on Ca(2+) as a cofactor. Expressed by the venom gland.

It is found in the secreted. The catalysed reaction is a 1,2-diacyl-sn-glycero-3-phosphocholine + H2O = a 1-acyl-sn-glycero-3-phosphocholine + a fatty acid + H(+). In terms of biological role, snake venom phospholipase A2 (PLA2) that inhibits neuromuscular transmission by blocking acetylcholine release from the nerve termini. PLA2 catalyzes the calcium-dependent hydrolysis of the 2-acyl groups in 3-sn-phosphoglycerides. In Bungarus multicinctus (Many-banded krait), this protein is Basic phospholipase A2 beta-bungarotoxin A-AL2 chain.